The primary structure comprises 374 residues: Very late expression factor 1 (374 aa).

Residues 169–349 (AIDTILNFID…NFDESSSDEE (181 aa)) enclose the Tyr recombinase domain. Catalysis depends on residues R210, K239, R303, and H326. Positions 328-374 (SPASTKPYLNKYNFDESSSDEESGGNNRDSSTGSSANSSSLYYQTGD) are disordered. Y335 serves as the catalytic O-(3'-phospho-DNA)-tyrosine intermediate. The span at 357–367 (SSTGSSANSSS) shows a compositional bias: low complexity.

It belongs to the 'phage' integrase family.

In terms of biological role, involved in very late gene activation. The polypeptide is Very late expression factor 1 (VLF-1) (Orgyia pseudotsugata (Douglas-fir tussock moth)).